Reading from the N-terminus, the 842-residue chain is Alanine--tRNA ligase (842 aa).

4 residues coordinate Zn(2+): His-549, His-553, Cys-650, and His-654.

This sequence belongs to the class-II aminoacyl-tRNA synthetase family. The cofactor is Zn(2+).

The protein resides in the cytoplasm. The catalysed reaction is tRNA(Ala) + L-alanine + ATP = L-alanyl-tRNA(Ala) + AMP + diphosphate. Its function is as follows. Catalyzes the attachment of alanine to tRNA(Ala) in a two-step reaction: alanine is first activated by ATP to form Ala-AMP and then transferred to the acceptor end of tRNA(Ala). Also edits incorrectly charged Ser-tRNA(Ala) and Gly-tRNA(Ala) via its editing domain. The protein is Alanine--tRNA ligase of Campylobacter jejuni (strain RM1221).